Here is a 146-residue protein sequence, read N- to C-terminus: Hut operon positive regulatory protein (146 aa).

The protein belongs to the HutP family. As to quaternary structure, homohexamer.

Functionally, antiterminator that binds to cis-acting regulatory sequences on the mRNA in the presence of histidine, thereby suppressing transcription termination and activating the hut operon for histidine utilization. The sequence is that of Hut operon positive regulatory protein from Bacillus cereus (strain ZK / E33L).